The sequence spans 100 residues: UPF0125 protein CV_3462 (100 aa).

This sequence belongs to the UPF0125 (RnfH) family.

This Chromobacterium violaceum (strain ATCC 12472 / DSM 30191 / JCM 1249 / CCUG 213 / NBRC 12614 / NCIMB 9131 / NCTC 9757 / MK) protein is UPF0125 protein CV_3462.